The primary structure comprises 628 residues: 1-deoxy-D-xylulose-5-phosphate synthase (628 aa).

Thiamine diphosphate-binding positions include H72 and G113–S115. D144 contributes to the Mg(2+) binding site. Residues G145–A146, N173, Y284, and E367 contribute to the thiamine diphosphate site. Residue N173 coordinates Mg(2+).

This sequence belongs to the transketolase family. DXPS subfamily. As to quaternary structure, homodimer. It depends on Mg(2+) as a cofactor. Thiamine diphosphate is required as a cofactor.

It catalyses the reaction D-glyceraldehyde 3-phosphate + pyruvate + H(+) = 1-deoxy-D-xylulose 5-phosphate + CO2. It participates in metabolic intermediate biosynthesis; 1-deoxy-D-xylulose 5-phosphate biosynthesis; 1-deoxy-D-xylulose 5-phosphate from D-glyceraldehyde 3-phosphate and pyruvate: step 1/1. Its function is as follows. Catalyzes the acyloin condensation reaction between C atoms 2 and 3 of pyruvate and glyceraldehyde 3-phosphate to yield 1-deoxy-D-xylulose-5-phosphate (DXP). This chain is 1-deoxy-D-xylulose-5-phosphate synthase, found in Exiguobacterium sibiricum (strain DSM 17290 / CCUG 55495 / CIP 109462 / JCM 13490 / 255-15).